Here is an 85-residue protein sequence, read N- to C-terminus: Large ribosomal subunit protein bL31B (85 aa).

It belongs to the bacterial ribosomal protein bL31 family. Type B subfamily. Part of the 50S ribosomal subunit.

The polypeptide is Large ribosomal subunit protein bL31B (Stutzerimonas stutzeri (strain A1501) (Pseudomonas stutzeri)).